The primary structure comprises 430 residues: Dihydrolipoyllysine-residue acetyltransferase component of pyruvate dehydrogenase complex (430 aa).

The region spanning alanine 2–aspartate 77 is the Lipoyl-binding domain. An N6-lipoyllysine modification is found at lysine 43. Residues aspartate 80 to arginine 122 form a disordered region. Basic and acidic residues predominate over residues methionine 84–alanine 104. The region spanning lysine 125–leucine 162 is the Peripheral subunit-binding (PSBD) domain. The interval glycine 165 to proline 199 is disordered. The span at threonine 168–valine 192 shows a compositional bias: low complexity. The active site involves histidine 401.

This sequence belongs to the 2-oxoacid dehydrogenase family. Forms a 24-polypeptide structural core with octahedral symmetry. Requires (R)-lipoate as cofactor.

It carries out the reaction N(6)-[(R)-dihydrolipoyl]-L-lysyl-[protein] + acetyl-CoA = N(6)-[(R)-S(8)-acetyldihydrolipoyl]-L-lysyl-[protein] + CoA. In terms of biological role, the pyruvate dehydrogenase complex catalyzes the overall conversion of pyruvate to acetyl-CoA and CO(2). It contains multiple copies of three enzymatic components: pyruvate dehydrogenase (E1), dihydrolipoamide acetyltransferase (E2) and lipoamide dehydrogenase (E3). The sequence is that of Dihydrolipoyllysine-residue acetyltransferase component of pyruvate dehydrogenase complex (pdhC) from Staphylococcus aureus (strain MRSA252).